The sequence spans 162 residues: MKIQCEVCEKAEAEVLCCSDEAVLCKPCDIKVHEANKLFQRHHRVALQKDAASATTASGAPLCDICQERKGYFFCLEDRAMLCNDCDEAIHTCNSHQRFLLSGVQVSDQSLTENSECSTSFSSETYQIQSKVSLNSQYSSEETEAGNSGEIVHKNPSVILSP.

8 residues coordinate Zn(2+): cysteine 5, cysteine 8, cysteine 28, histidine 33, cysteine 63, cysteine 66, cysteine 86, and histidine 91. Residues 5–47 (CEVCEKAEAEVLCCSDEAVLCKPCDIKVHEANKLFQRHHRVAL) form a B box-type 1; atypical zinc finger. The B box-type 2; atypical zinc finger occupies 63–101 (CDICQERKGYFFCLEDRAMLCNDCDEAIHTCNSHQRFLL). A disordered region spans residues 137–162 (QYSSEETEAGNSGEIVHKNPSVILSP).

It is found in the nucleus. Its function is as follows. Probable transcription factor that may be involved in seedling photomorphogenesis. This chain is B-box zinc finger protein 23, found in Arabidopsis thaliana (Mouse-ear cress).